Here is a 286-residue protein sequence, read N- to C-terminus: Dioxygenase trt7 (286 aa).

His-129, Asp-131, and His-206 together coordinate Fe cation.

It belongs to the PhyH family. Homodimer. Fe cation serves as cofactor.

It functions in the pathway secondary metabolite biosynthesis; terpenoid biosynthesis. Its function is as follows. Dioxygenase; part of the gene cluster that mediates the biosynthesis of terretonin, a fungal meroterpenoid that acts as a mycotoxin. The first step of the pathway is the synthesis of 3,5-dimethylorsellinic acid (DMOA) by the polyketide synthase trt4. DMOA is then prenylated into farnesyl-DMOA by the polyprenyl transferase trt2. Methylation by the methyltransferase trt5 then leads to farnesyl-DMOA methyl ester which is further subject to epoxidation by the FAD-dependent monooxygenase trt8 to yield epoxyfarnesyl-DMOA methyl ester. Cyclization of epoxyfarnesyl-DMOA methyl ester by the terpene cyclase trt1 leads to a tetracycle intermediate which is in turn converted to preterretonin. Dehydrogenase trt9 comes next to transform preterretonin to preterrenoid. The FAD-dependent monooxygenase trt3 is then required for the C-hydroxylation at C16 of preterrenoid to yield terrenoid. The cytochrome P450 trt6 catalyzes three successive oxidations to transform terrenoid into an unstable intermediate, which then undergoes the D-ring expansion and unusual rearrangement of the methoxy group to afford the core skeleton of terretonin. Trt14 catalyzes the D-ring expansion of terretonin involving intramolecular methoxy rearrangement as well as the hydrolysis of the expanded D-ring and the methyl ester moiety. Finally, the nonheme iron-dependent dioxygenase trt7 accomplishes the last two oxidation reactions steps to complete the biosynthesis of terretonin. Terretonin C is produced via spontaneous decarboxylation of the terretonin precursor. Another shunt product of the terretonin biosynthesis is dihydrofarnesyl-DMOA, derived from epoxyfarnesyl-DMOA through hydrolysis of the epoxide. The sequence is that of Dioxygenase trt7 from Aspergillus terreus (strain NIH 2624 / FGSC A1156).